A 282-amino-acid polypeptide reads, in one-letter code: Secretory carrier-associated membrane protein 1 (282 aa).

Positions 1–49 are disordered; it reads MSRYQSHSFDDGEINPFANPTSVPAATSKLSPLPPEPYDRGATMDIPLD. The Cytoplasmic portion of the chain corresponds to 1–117; sequence MSRYQSHSFD…EIPIHLQRIQ (117 aa). Polar residues predominate over residues 18–30; that stretch reads ANPTSVPAATSKL. The residue at position 31 (Ser-31) is a Phosphoserine. Residues 48–93 adopt a coiled-coil conformation; that stretch reads LDSGKDLKAKEKELREKEAELKRREQEIKRKEDAIAQAGIVIEEKN. The next 4 helical transmembrane spans lie at 118–138, 150–170, 185–205, and 233–253; these read YVAF…IVAV, IWFL…VMWY, FGWF…AAVA, and IFYF…IWVI. Topologically, residues 254-282 are cytoplasmic; it reads QQVYMYFRGSGKAAEMKQEATRRAMMAAL.

It belongs to the SCAMP family.

It is found in the cell membrane. The protein localises to the cytoplasmic vesicle. It localises to the secretory vesicle membrane. Probably involved in membrane trafficking. This chain is Secretory carrier-associated membrane protein 1 (SCAMP1), found in Arabidopsis thaliana (Mouse-ear cress).